A 492-amino-acid polypeptide reads, in one-letter code: 6-phosphogluconate dehydrogenase, decarboxylating 2 (492 aa).

Residues 12–17 (GLAVMG), 35–37 (NRT), 77–79 (IKA), and Asn105 each bind NADP(+). Substrate-binding positions include Asn105 and 131–133 (SGG). Lys185 acts as the Proton acceptor in catalysis. Residue 188-189 (HN) coordinates substrate. The active-site Proton donor is the Glu192. Substrate-binding residues include Tyr193, Lys262, Arg289, Arg449, and His455.

Belongs to the 6-phosphogluconate dehydrogenase family. Homodimer.

It carries out the reaction 6-phospho-D-gluconate + NADP(+) = D-ribulose 5-phosphate + CO2 + NADPH. It functions in the pathway carbohydrate degradation; pentose phosphate pathway; D-ribulose 5-phosphate from D-glucose 6-phosphate (oxidative stage): step 3/3. Functionally, catalyzes the oxidative decarboxylation of 6-phosphogluconate to ribulose 5-phosphate and CO(2), with concomitant reduction of NADP to NADPH. The chain is 6-phosphogluconate dehydrogenase, decarboxylating 2 (GND2) from Saccharomyces cerevisiae (strain ATCC 204508 / S288c) (Baker's yeast).